The primary structure comprises 130 residues: MAQVQYRGTGRRKNSSARVRLVPGSGKIVMNNKAIEDYIPFASIREVVLQPFNVTETLGNYDALVTVRGGGFSGQAGATRHGIARALLEVDPDFRGPLKRAGLLTRDARMKERKKPGLKKARKASQFSKR.

The segment at 101–130 (AGLLTRDARMKERKKPGLKKARKASQFSKR) is disordered. A compositionally biased stretch (basic residues) spans 111–130 (KERKKPGLKKARKASQFSKR).

It belongs to the universal ribosomal protein uS9 family.

In Levilactobacillus brevis (strain ATCC 367 / BCRC 12310 / CIP 105137 / JCM 1170 / LMG 11437 / NCIMB 947 / NCTC 947) (Lactobacillus brevis), this protein is Small ribosomal subunit protein uS9.